The following is a 357-amino-acid chain: Non-structural protein NS2 (357 aa).

Disordered regions lie at residues 162–199 (QNERESAPRLQVQSVSPREESRWMDDDEAKVDEEAKEM) and 228–268 (LDEK…KTHI). Acidic residues-rich tracts occupy residues 230–243 (EKDEEDRDEREDEE) and 250–260 (DDDEQGEDASD).

Belongs to the orbivirus non-structural protein NS2 family.

Single-stranded RNA-binding protein. The sequence is that of Non-structural protein NS2 (Segment-8) from Antilocapra americana (Pronghorn).